The primary structure comprises 169 residues: uncharacterized protein (169 aa).

The N-terminal 91 residues, 1–91 (MFSSTFRRLA…NKEQYTVRCL (91 aa)), are a transit peptide targeting the mitochondrion. A disordered region spans residues 54-76 (PQPKSPGSLPSSTRTAPNPNGEE). Residues 61–71 (SLPSSTRTAPN) show a composition bias toward polar residues.

The protein localises to the mitochondrion. This is an uncharacterized protein from Trypanosoma brucei brucei (strain 927/4 GUTat10.1).